Here is a 132-residue protein sequence, read N- to C-terminus: Homeobox protein ceh-1 (132 aa).

A DNA-binding region (homeobox) is located at residues 1 to 60 (MRRARTAFTYEQLVALENKFKTSRYLSVVERLNLAIQLQLSETQVKIWFQNRRTKWKKHN). The interval 56–80 (WKKHNPGQDANTPQTPPSSDETQIQ) is disordered. Residues 63–80 (QDANTPQTPPSSDETQIQ) show a composition bias toward polar residues.

The protein localises to the nucleus. This chain is Homeobox protein ceh-1 (ceh-1), found in Caenorhabditis elegans.